The primary structure comprises 782 residues: Probable methionine--tRNA ligase, cytoplasmic (782 aa).

The short motif at 231–241 is the 'HIGH' region element; sequence PYVNNVPHLGN. Residues 551 to 555 carry the 'KMSKS' region motif; the sequence is KFSKS.

Belongs to the class-I aminoacyl-tRNA synthetase family.

Its subcellular location is the cytoplasm. The catalysed reaction is tRNA(Met) + L-methionine + ATP = L-methionyl-tRNA(Met) + AMP + diphosphate. The sequence is that of Probable methionine--tRNA ligase, cytoplasmic (rar1) from Schizosaccharomyces pombe (strain 972 / ATCC 24843) (Fission yeast).